The chain runs to 343 residues: DNA-directed RNA polymerase subunit alpha (343 aa).

The alpha N-terminal domain (alpha-NTD) stretch occupies residues 1 to 243 (MTQEIDEKIP…EQLDIFINFD (243 aa)). The tract at residues 261-343 (ENPYLDKPVE…NAPSDAETEE (83 aa)) is alpha C-terminal domain (alpha-CTD).

The protein belongs to the RNA polymerase alpha chain family. In terms of assembly, homodimer. The RNAP catalytic core consists of 2 alpha, 1 beta, 1 beta' and 1 omega subunit. When a sigma factor is associated with the core the holoenzyme is formed, which can initiate transcription.

It catalyses the reaction RNA(n) + a ribonucleoside 5'-triphosphate = RNA(n+1) + diphosphate. DNA-dependent RNA polymerase catalyzes the transcription of DNA into RNA using the four ribonucleoside triphosphates as substrates. The chain is DNA-directed RNA polymerase subunit alpha from Desulfotalea psychrophila (strain LSv54 / DSM 12343).